The primary structure comprises 101 residues: MKLTPREQEKLLIVVAADLARRRKERGLKLNYPEAVALITYELLEGARDGRTVAELMQYGATILTRDDVMEGVADMIDEIQVEATFPDGTKLVTVHQPIRS.

The protein belongs to the urease gamma subunit family. In terms of assembly, heterotrimer of UreA (gamma), UreB (beta) and UreC (alpha) subunits. Three heterotrimers associate to form the active enzyme.

It localises to the cytoplasm. The enzyme catalyses urea + 2 H2O + H(+) = hydrogencarbonate + 2 NH4(+). It participates in nitrogen metabolism; urea degradation; CO(2) and NH(3) from urea (urease route): step 1/1. This Geobacillus kaustophilus (strain HTA426) protein is Urease subunit gamma.